The following is a 156-amino-acid chain: Extracellular giant hemoglobin major globin subunit A1 (156 aa).

Residues 1-16 (MKVLIIFACLVVMASA) form the signal peptide. One can recognise a Globin domain in the interval 17 to 156 (VCNRLEQILV…YERIASGISG (140 aa)). Cys18 and Cys146 are joined by a disulfide. A hydrogen sulfide-binding site is contributed by Cys79. His110 contacts heme b.

This sequence belongs to the globin family. As to quaternary structure, the 400 kDa hemoglobin consists of a spherical 24-mer arranged as a double layer of dome-shaped dodecamers. Each dodecamer is composed of the 3-fold trimer of the tetramer A1-A2-B1-B2 having one intra-tetramer (A1-B2) disulfide bond and one inter-tetramer (B1-B2) disulfide bond per tetramer.

It is found in the secreted. The extracellular giant hemoglobin is able to bind and transport oxygen and hydrosulfide simultaneously and reversibly at two different sites. This is Extracellular giant hemoglobin major globin subunit A1 (ghbA1) from Oligobrachia mashikoi (Beard worm).